The chain runs to 100 residues: Integration host factor subunit alpha (100 aa).

It belongs to the bacterial histone-like protein family. As to quaternary structure, heterodimer of an alpha and a beta chain.

Its function is as follows. This protein is one of the two subunits of integration host factor, a specific DNA-binding protein that functions in genetic recombination as well as in transcriptional and translational control. The sequence is that of Integration host factor subunit alpha from Ectopseudomonas mendocina (strain ymp) (Pseudomonas mendocina).